A 261-amino-acid polypeptide reads, in one-letter code: 3-methyl-2-oxobutanoate hydroxymethyltransferase (261 aa).

Mg(2+) is bound by residues D42 and D81. 3-methyl-2-oxobutanoate is bound by residues 42-43 (DS), D81, and K110. A Mg(2+)-binding site is contributed by E112. E179 serves as the catalytic Proton acceptor.

Belongs to the PanB family. In terms of assembly, homodecamer; pentamer of dimers. Requires Mg(2+) as cofactor.

Its subcellular location is the cytoplasm. It carries out the reaction 3-methyl-2-oxobutanoate + (6R)-5,10-methylene-5,6,7,8-tetrahydrofolate + H2O = 2-dehydropantoate + (6S)-5,6,7,8-tetrahydrofolate. It participates in cofactor biosynthesis; (R)-pantothenate biosynthesis; (R)-pantoate from 3-methyl-2-oxobutanoate: step 1/2. Its function is as follows. Catalyzes the reversible reaction in which hydroxymethyl group from 5,10-methylenetetrahydrofolate is transferred onto alpha-ketoisovalerate to form ketopantoate. The protein is 3-methyl-2-oxobutanoate hydroxymethyltransferase of Thermus thermophilus (strain ATCC 27634 / DSM 579 / HB8).